Consider the following 214-residue polypeptide: tRNA (guanine-N(7)-)-methyltransferase (214 aa).

Positions 43, 68, 95, and 117 each coordinate S-adenosyl-L-methionine. D117 is an active-site residue. Substrate-binding positions include K121, D153, and 190 to 193 (TEYE).

It belongs to the class I-like SAM-binding methyltransferase superfamily. TrmB family.

The enzyme catalyses guanosine(46) in tRNA + S-adenosyl-L-methionine = N(7)-methylguanosine(46) in tRNA + S-adenosyl-L-homocysteine. Its pathway is tRNA modification; N(7)-methylguanine-tRNA biosynthesis. Functionally, catalyzes the formation of N(7)-methylguanine at position 46 (m7G46) in tRNA. This is tRNA (guanine-N(7)-)-methyltransferase from Staphylococcus aureus (strain JH1).